Here is a 368-residue protein sequence, read N- to C-terminus: DNA replication and repair protein RecF (368 aa).

30-37 (GNNAQGKT) contributes to the ATP binding site.

It belongs to the RecF family.

The protein resides in the cytoplasm. Its function is as follows. The RecF protein is involved in DNA metabolism; it is required for DNA replication and normal SOS inducibility. RecF binds preferentially to single-stranded, linear DNA. It also seems to bind ATP. The protein is DNA replication and repair protein RecF of Streptococcus pyogenes serotype M5 (strain Manfredo).